We begin with the raw amino-acid sequence, 328 residues long: MHPAEVFDYEDIQLVPNKCIIDSRSEADTSIEFGPRRFKIPVVPANMETVINEPLAVWLAEHDYFYVMHRFQPEDRRGFIERMQAKSLFASISVGVKPEEVTFIDELATAGLTPEYITIDIAHGHSDAVIRMIHHIKQQLPNSFVIAGNVGTPEAVRELENAGADATKVGIGPGKACITKLKTGFGTGGWQLAAVRLCAKAARKPIVADGGIRYNGDIAKSIRFGASMVMIGSMLAGHEQSPGSLLTIDGRTFKQYWGSASEKQKGAYRNVEGKQMLVPYRGDIDQTLTAMEEDLQSAISYAGGRNLLDIRTVDYVIVKSSILNGDNY.

Catalysis depends on Cys177, which acts as the Thioimidate intermediate. 206-229 (IVADGGIRYNGDIAKSIRFGASMV) is an NADP(+) binding site.

Belongs to the IMPDH/GMPR family. GuaC type 2 subfamily.

It carries out the reaction IMP + NH4(+) + NADP(+) = GMP + NADPH + 2 H(+). Functionally, catalyzes the irreversible NADPH-dependent deamination of GMP to IMP. It functions in the conversion of nucleobase, nucleoside and nucleotide derivatives of G to A nucleotides, and in maintaining the intracellular balance of A and G nucleotides. The protein is GMP reductase of Levilactobacillus brevis (strain ATCC 367 / BCRC 12310 / CIP 105137 / JCM 1170 / LMG 11437 / NCIMB 947 / NCTC 947) (Lactobacillus brevis).